The sequence spans 380 residues: O-phospho-L-seryl-tRNA:Cys-tRNA synthase (380 aa).

Pyridoxal 5'-phosphate is bound by residues alanine 86–arginine 87, asparagine 192, and serine 215–histidine 217. Residue lysine 218 is modified to N6-(pyridoxal phosphate)lysine.

It belongs to the SepCysS family. As to quaternary structure, homodimer. Interacts with SepRS. It depends on pyridoxal 5'-phosphate as a cofactor.

It catalyses the reaction O-phospho-L-seryl-tRNA(Cys) + hydrogen sulfide + H(+) = L-cysteinyl-tRNA(Cys) + phosphate. In terms of biological role, converts O-phospho-L-seryl-tRNA(Cys) (Sep-tRNA(Cys)) to L-cysteinyl-tRNA(Cys) (Cys-tRNA(Cys)). In Methanococcus maripaludis (strain C6 / ATCC BAA-1332), this protein is O-phospho-L-seryl-tRNA:Cys-tRNA synthase.